The sequence spans 333 residues: tRNA (guanine(37)-N(1))/4-demethylwyosine(37)-methyltransferase Taw22 (333 aa).

S-adenosyl-L-methionine-binding positions include Arg174, Phe191, 213 to 214 (EI), and 243 to 244 (DV).

This sequence belongs to the class I-like SAM-binding methyltransferase superfamily. TRM5/TYW2 family.

It is found in the cytoplasm. It carries out the reaction guanosine(37) in tRNA + S-adenosyl-L-methionine = N(1)-methylguanosine(37) in tRNA + S-adenosyl-L-homocysteine + H(+). It catalyses the reaction 4-demethylwyosine(37) in tRNA(Phe) + S-adenosyl-L-methionine = isowyosine(37) in tRNA(Phe) + S-adenosyl-L-homocysteine + H(+). Functionally, catalyzes both the N1-methylation of guanosine and the C7-methylation of 4-demethylwyosine (imG-14) at position 37 in tRNA(Phe). This Pyrococcus abyssi (strain GE5 / Orsay) protein is tRNA (guanine(37)-N(1))/4-demethylwyosine(37)-methyltransferase Taw22.